The chain runs to 163 residues: Nucleotide-binding protein BC_1159 (163 aa).

The protein belongs to the YajQ family.

Nucleotide-binding protein. The sequence is that of Nucleotide-binding protein BC_1159 from Bacillus cereus (strain ATCC 14579 / DSM 31 / CCUG 7414 / JCM 2152 / NBRC 15305 / NCIMB 9373 / NCTC 2599 / NRRL B-3711).